A 287-amino-acid chain; its full sequence is Beta-lactamase GES-2 (287 aa).

A signal peptide spans 1-18 (MRFIHALLLAGIAHSAYA). Cysteine 63 and cysteine 233 are disulfide-bonded. The Nucleophile; acyl-ester intermediate role is filled by serine 64. Residues lysine 67, serine 125, and glutamate 161 each contribute to the a beta-lactam site.

The protein belongs to the class-A beta-lactamase family.

The catalysed reaction is a beta-lactam + H2O = a substituted beta-amino acid. Its activity is regulated as follows. Inhibited by the beta-lactamase-blocking agents clavulanic acid, sulbactam and tazobactam. Its function is as follows. Extended-spectrum beta-lactamase (ESBL) which confers resistance to penicillins, as well as first, third and fourth-generation cephalosporins. Has modest carbapenem-hydrolyzing activity. Has cefotaxime-hydrolyzing activity. The chain is Beta-lactamase GES-2 from Pseudomonas aeruginosa.